A 510-amino-acid chain; its full sequence is MTDAVQNEINQEQIAQEENKLIAERRSKLDHIRKNCKANGHPNSFRRDSLAGDLQKKFGEKSKEELEALNHVVSIAGRVMAKRGPFLVIQETSGRIQAYASKEVQQELKDKYQGLDIGDIIGVQGALHKSGKGDLYVNMEQFQLLTKALRPLPEKFHGLTDQEMRYRQRYVDLIVNENSRNAFIVRSKVMSAIRNFMISKQFMEVETPMMHVIPGGASARPFITHHNALDMPMYLRIAPELYLKRLVVGGFDRVFEINRNFRNEGLSPRHNPEFTMMEFYMAYADYKDLMDLTEELLSSVALEVLGSTSMPYGEHTVEFGGKYARMSMFDAIKHYNPNHAQIQALTEEDIQNRDLMVSIAKSVHVDVEPFWTCGQLLEEIFGETAEPKLMQPTFITGYPADISPLARRSDDNPFFTDRFEFFIGGREVANGFSELNDAEDQDARFKAQVEAKESGDDEAMFYDADYITALEHGLPPTAGQGIGIDRLVMLLTNTHTIRDVILFPAMRPQQ.

E420 and E427 together coordinate Mg(2+).

It belongs to the class-II aminoacyl-tRNA synthetase family. In terms of assembly, homodimer. Mg(2+) is required as a cofactor.

The protein localises to the cytoplasm. It catalyses the reaction tRNA(Lys) + L-lysine + ATP = L-lysyl-tRNA(Lys) + AMP + diphosphate. The protein is Lysine--tRNA ligase (lysS) of Vibrio cholerae serotype O1 (strain ATCC 39315 / El Tor Inaba N16961).